The chain runs to 294 residues: Elongation factor Ts (294 aa).

Residues 79–82 form an involved in Mg(2+) ion dislocation from EF-Tu region; it reads TDFV.

Belongs to the EF-Ts family.

It localises to the cytoplasm. Functionally, associates with the EF-Tu.GDP complex and induces the exchange of GDP to GTP. It remains bound to the aminoacyl-tRNA.EF-Tu.GTP complex up to the GTP hydrolysis stage on the ribosome. The polypeptide is Elongation factor Ts (Oceanobacillus iheyensis (strain DSM 14371 / CIP 107618 / JCM 11309 / KCTC 3954 / HTE831)).